Reading from the N-terminus, the 321-residue chain is Glucokinase (321 aa).

8–13 (GDVGGT) lines the ATP pocket.

The protein belongs to the bacterial glucokinase family.

The protein resides in the cytoplasm. The enzyme catalyses D-glucose + ATP = D-glucose 6-phosphate + ADP + H(+). This Salmonella choleraesuis (strain SC-B67) protein is Glucokinase.